The sequence spans 207 residues: Large ribosomal subunit protein uL3c (207 aa).

The disordered stretch occupies residues 128 to 148 (FTRGPMTHGSKNHRAPGSIGM).

The protein belongs to the universal ribosomal protein uL3 family. In terms of assembly, part of the 50S ribosomal subunit.

It localises to the plastid. Its subcellular location is the chloroplast. Its function is as follows. One of the primary rRNA binding proteins, it binds directly near the 3'-end of the 23S rRNA, where it nucleates assembly of the 50S subunit. The polypeptide is Large ribosomal subunit protein uL3c (rpl3) (Trieres chinensis (Marine centric diatom)).